A 367-amino-acid polypeptide reads, in one-letter code: Queuine tRNA-ribosyltransferase (367 aa).

Asp-89 (proton acceptor) is an active-site residue. Substrate contacts are provided by residues 89-93 (DSGGF), Asp-143, Gln-187, and Gly-214. The segment at 245-251 (GVGTPAD) is RNA binding. Asp-264 acts as the Nucleophile in catalysis. An RNA binding; important for wobble base 34 recognition region spans residues 269–273 (TRNAR). Positions 302, 304, 307, and 333 each coordinate Zn(2+).

It belongs to the queuine tRNA-ribosyltransferase family. In terms of assembly, homodimer. Within each dimer, one monomer is responsible for RNA recognition and catalysis, while the other monomer binds to the replacement base PreQ1. It depends on Zn(2+) as a cofactor.

The catalysed reaction is 7-aminomethyl-7-carbaguanine + guanosine(34) in tRNA = 7-aminomethyl-7-carbaguanosine(34) in tRNA + guanine. It participates in tRNA modification; tRNA-queuosine biosynthesis. In terms of biological role, catalyzes the base-exchange of a guanine (G) residue with the queuine precursor 7-aminomethyl-7-deazaguanine (PreQ1) at position 34 (anticodon wobble position) in tRNAs with GU(N) anticodons (tRNA-Asp, -Asn, -His and -Tyr). Catalysis occurs through a double-displacement mechanism. The nucleophile active site attacks the C1' of nucleotide 34 to detach the guanine base from the RNA, forming a covalent enzyme-RNA intermediate. The proton acceptor active site deprotonates the incoming PreQ1, allowing a nucleophilic attack on the C1' of the ribose to form the product. After dissociation, two additional enzymatic reactions on the tRNA convert PreQ1 to queuine (Q), resulting in the hypermodified nucleoside queuosine (7-(((4,5-cis-dihydroxy-2-cyclopenten-1-yl)amino)methyl)-7-deazaguanosine). This chain is Queuine tRNA-ribosyltransferase, found in Nitrosospira multiformis (strain ATCC 25196 / NCIMB 11849 / C 71).